The chain runs to 192 residues: MYTREELMEIVSERVKKCTACPLHLNRTNVVVGEGNLDTRIVFVGEGPGEEEDKTGRPFVGRAGMLLTELLRESGIRREDVYICNVVKCRPPNNRTPTPEEQAACGHFLLAQIEIINPDVIVALGATALSFFVDGKKVSITKVRGNPIDWLGGKKVIPTFHPSYLLRNRSNELRRIVLEDIEKAKSFIKKEG.

Residues C18 and C21 each contribute to the [4Fe-4S] cluster site. Residues 45 to 47, F59, and N85 each bind uracil; that span reads GEG. The [4Fe-4S] cluster site is built by C89 and C105. H161 serves as a coordination point for uracil.

Belongs to the uracil-DNA glycosylase (UDG) superfamily. Type 4 (UDGa) family.

It carries out the reaction Hydrolyzes single-stranded DNA or mismatched double-stranded DNA and polynucleotides, releasing free uracil.. Its function is as follows. Removes uracil bases that are present in DNA as a result of either deamination of cytosine or misincorporation of dUMP instead of dTMP. Can remove uracil from double-stranded DNA containing either a U/G or U/A base pair as well as from single-stranded DNA. The protein is Type-4 uracil-DNA glycosylase of Thermotoga maritima (strain ATCC 43589 / DSM 3109 / JCM 10099 / NBRC 100826 / MSB8).